Consider the following 477-residue polypeptide: Bifunctional protein HldE (477 aa).

The ribokinase stretch occupies residues 1 to 318 (MKVTLSEFER…ENAVRGRADT (318 aa)). Lys-179 carries the post-translational modification N6-acetyllysine. 195 to 198 (NLSE) is an ATP binding site. The active site involves Asp-264. The tract at residues 344-477 (MTNGVFDILH…IKKIQQDKKG (134 aa)) is cytidylyltransferase.

In the N-terminal section; belongs to the carbohydrate kinase PfkB family. This sequence in the C-terminal section; belongs to the cytidylyltransferase family. Homodimer.

The catalysed reaction is D-glycero-beta-D-manno-heptose 7-phosphate + ATP = D-glycero-beta-D-manno-heptose 1,7-bisphosphate + ADP + H(+). It carries out the reaction D-glycero-beta-D-manno-heptose 1-phosphate + ATP + H(+) = ADP-D-glycero-beta-D-manno-heptose + diphosphate. The protein operates within nucleotide-sugar biosynthesis; ADP-L-glycero-beta-D-manno-heptose biosynthesis; ADP-L-glycero-beta-D-manno-heptose from D-glycero-beta-D-manno-heptose 7-phosphate: step 1/4. It functions in the pathway nucleotide-sugar biosynthesis; ADP-L-glycero-beta-D-manno-heptose biosynthesis; ADP-L-glycero-beta-D-manno-heptose from D-glycero-beta-D-manno-heptose 7-phosphate: step 3/4. Its function is as follows. Catalyzes the phosphorylation of D-glycero-D-manno-heptose 7-phosphate at the C-1 position to selectively form D-glycero-beta-D-manno-heptose-1,7-bisphosphate. Catalyzes the ADP transfer from ATP to D-glycero-beta-D-manno-heptose 1-phosphate, yielding ADP-D-glycero-beta-D-manno-heptose. The protein is Bifunctional protein HldE of Shigella boydii serotype 18 (strain CDC 3083-94 / BS512).